The chain runs to 272 residues: U11/U12 small nuclear ribonucleoprotein 35 kDa protein (272 aa).

The RRM domain maps to 51-129 (LTLFVSRLSP…REVFVDFELE (79 aa)). Basic and acidic residues-rich tracts occupy residues 146–162 (GKKE…DRPF) and 190–272 (RDRS…EHNR). Residues 146-272 (GKKESGQLRF…RKHRSDEHNR (127 aa)) form a disordered region. A coiled-coil region spans residues 221–258 (TKDDKEQNAEHTKRERSREQAKNDKDKEKKDSKRERSR).

It is found in the nucleus. In Xenopus laevis (African clawed frog), this protein is U11/U12 small nuclear ribonucleoprotein 35 kDa protein (snrnp35).